Reading from the N-terminus, the 701-residue chain is Coiled-coil domain-containing protein 62 (701 aa).

2 coiled-coil regions span residues 61 to 197 (ETST…LQAR) and 241 to 342 (TCVV…QFLN). The tract at residues 624 to 652 (KSAEREEESAALPDRRTSANEKDDFSPTS) is disordered. Residues 636–648 (PDRRTSANEKDDF) show a composition bias toward basic and acidic residues. 2 consecutive short sequence motifs (LXXLL motif) follow at residues 654–658 (LQRLL) and 670–674 (LSTLL).

As to quaternary structure, interacts with ESR1 and ESR2 in the presence of estradiol/E2. The interaction with ESR2 recruits CCDC62 to ER target genes, including cyclin-D1/CCND1 AP-1 promoter. Interacts with GOPC. Highly expressed in testis, not detected in other tissues (at protein level). Expressed at low levels in the epididymis, lung, spleen, bladder, kidney, liver, muscle.

It localises to the cytoplasm. The protein localises to the nucleus. It is found in the cytoplasmic vesicle. Its subcellular location is the secretory vesicle. The protein resides in the acrosome. Nuclear receptor coactivator that can enhance preferentially estrogen receptors ESR1 and ESR2 transactivation. Also modulates progesterone/PGR, glucocorticoid/NR3C1 and androgen/AR receptors transactivation, although at lower level; little effect on vitamin D receptor/VDR. Required for normal spermiogenesis. It probably plays a role in acrosome formation. This chain is Coiled-coil domain-containing protein 62 (Ccdc62), found in Mus musculus (Mouse).